The chain runs to 552 residues: Dihydroxy-acid dehydratase (552 aa).

Aspartate 78 is a Mg(2+) binding site. Cysteine 119 is a binding site for [2Fe-2S] cluster. The Mg(2+) site is built by aspartate 120 and lysine 121. At lysine 121 the chain carries N6-carboxylysine. Residue cysteine 191 coordinates [2Fe-2S] cluster. Glutamate 442 lines the Mg(2+) pocket. Serine 468 functions as the Proton acceptor in the catalytic mechanism.

The protein belongs to the IlvD/Edd family. Homodimer. Requires [2Fe-2S] cluster as cofactor. It depends on Mg(2+) as a cofactor.

The catalysed reaction is (2R)-2,3-dihydroxy-3-methylbutanoate = 3-methyl-2-oxobutanoate + H2O. It carries out the reaction (2R,3R)-2,3-dihydroxy-3-methylpentanoate = (S)-3-methyl-2-oxopentanoate + H2O. The protein operates within amino-acid biosynthesis; L-isoleucine biosynthesis; L-isoleucine from 2-oxobutanoate: step 3/4. It participates in amino-acid biosynthesis; L-valine biosynthesis; L-valine from pyruvate: step 3/4. In terms of biological role, functions in the biosynthesis of branched-chain amino acids. Catalyzes the dehydration of (2R,3R)-2,3-dihydroxy-3-methylpentanoate (2,3-dihydroxy-3-methylvalerate) into 2-oxo-3-methylpentanoate (2-oxo-3-methylvalerate) and of (2R)-2,3-dihydroxy-3-methylbutanoate (2,3-dihydroxyisovalerate) into 2-oxo-3-methylbutanoate (2-oxoisovalerate), the penultimate precursor to L-isoleucine and L-valine, respectively. The polypeptide is Dihydroxy-acid dehydratase (Clostridium botulinum (strain Eklund 17B / Type B)).